A 357-amino-acid polypeptide reads, in one-letter code: MASARNGVSKDELLPVYERRSQRDGDISGSVKSFASTIGNSASAAVLAYCLSSISMTLVNKYVVSGASWNLSFLYLAMQSFIGTVAILACKKTGLIQNLALFDLKKAQTWLPISLLLVGMIYTGNKALQFLSVPVYTIFKNLTIIVIAYGEVLMVGGGVKPLALLSFGLMVLSSVVAAWADIQNATTATVGASSDSTAAALSALNAGYAWMGTNVIFSASYALGMRRVIKKTNFDNWDVMFYNNLLSIPILLLASVLAEDWSSENLQRNFPAELRQSLFIGILYSGVAAVFISYCTAWCVRATSSTTYAMVGALNKLPLAVAGIVFFAAPVTFGSVSAIVLGFISGLVYARAKSTGA.

At 1 to 33 the chain is on the cytoplasmic side; it reads MASARNGVSKDELLPVYERRSQRDGDISGSVKS. A helical membrane pass occupies residues 34 to 54; the sequence is FASTIGNSASAAVLAYCLSSI. At 55-68 the chain is on the lumenal side; that stretch reads SMTLVNKYVVSGAS. Residues 69-89 form a helical membrane-spanning segment; the sequence is WNLSFLYLAMQSFIGTVAILA. Topologically, residues 90-107 are cytoplasmic; that stretch reads CKKTGLIQNLALFDLKKA. The chain crosses the membrane as a helical span at residues 108 to 128; it reads QTWLPISLLLVGMIYTGNKAL. A topological domain (lumenal) is located at residue glutamine 129. Residues 130–150 traverse the membrane as a helical segment; it reads FLSVPVYTIFKNLTIIVIAYG. Residues 151-161 are Cytoplasmic-facing; the sequence is EVLMVGGGVKP. Residues 162 to 181 form a helical membrane-spanning segment; sequence LALLSFGLMVLSSVVAAWAD. Residues 182-196 lie on the Lumenal side of the membrane; it reads IQNATTATVGASSDS. A glycan (N-linked (GlcNAc...) asparagine) is linked at asparagine 184. The helical transmembrane segment at 197–217 threads the bilayer; the sequence is TAAALSALNAGYAWMGTNVIF. The Cytoplasmic portion of the chain corresponds to 218–236; the sequence is SASYALGMRRVIKKTNFDN. Residues 237–257 traverse the membrane as a helical segment; that stretch reads WDVMFYNNLLSIPILLLASVL. Residues 258-277 are Lumenal-facing; sequence AEDWSSENLQRNFPAELRQS. The helical transmembrane segment at 278-298 threads the bilayer; that stretch reads LFIGILYSGVAAVFISYCTAW. Topologically, residues 299 to 306 are cytoplasmic; sequence CVRATSST. Residues 307–327 traverse the membrane as a helical segment; the sequence is TYAMVGALNKLPLAVAGIVFF. The Lumenal portion of the chain corresponds to 328–332; sequence AAPVT. A helical transmembrane segment spans residues 333–352; it reads FGSVSAIVLGFISGLVYARA. The Cytoplasmic portion of the chain corresponds to 353-357; sequence KSTGA.

This sequence belongs to the TPT transporter family. SLC35D subfamily. Homooligomer.

It localises to the golgi apparatus membrane. The protein resides in the cytoplasmic vesicle membrane. It is found in the endoplasmic reticulum membrane. Involved in the import of GDP-mannose from the cytoplasm into the Golgi lumen. The protein is GDP-mannose transporter 2 (gmt2) of Neosartorya fischeri (strain ATCC 1020 / DSM 3700 / CBS 544.65 / FGSC A1164 / JCM 1740 / NRRL 181 / WB 181) (Aspergillus fischerianus).